We begin with the raw amino-acid sequence, 333 residues long: Polygalacturonase inhibitor (333 aa).

A signal peptide spans 1–27 (METSKLFLLSSSLLLVLLATRPCPSLS). 2 disulfides stabilise this stretch: Cys-30/Cys-60 and Cys-61/Cys-68. LRR repeat units follow at residues 72–96 (THRI…VGDL), 97–120 (PFLE…AIAK), 121–144 (LKHL…FFSE), 145–169 (LKNL…LSLL), 170–192 (PNLG…SFGK), 194–220 (AGST…GFDP), 221–240 (NVMD…FFNA), 241–263 (NKST…RVEF), 264–288 (PKSL…MTSL), and 290–312 (LQFL…KLQS). Residues Asn-109, Asn-133, Asn-147, and Asn-157 are each glycosylated (N-linked (GlcNAc...) asparagine). Asn-241 is a glycosylation site (N-linked (GlcNAc...) asparagine). The N-linked (GlcNAc...) asparagine glycan is linked to Asn-294. Disulfide bonds link Cys-301/Cys-323 and Cys-325/Cys-332.

Belongs to the polygalacturonase-inhibiting protein family.

It is found in the secreted. Its subcellular location is the cell wall. The protein localises to the membrane. Its function is as follows. Inhibitor of fungal polygalacturonase. It is an important factor for plant resistance to phytopathogenic fungi. The sequence is that of Polygalacturonase inhibitor (pgip) from Vitis vinifera (Grape).